A 119-amino-acid polypeptide reads, in one-letter code: Large ribosomal subunit protein uL22 (119 aa).

It belongs to the universal ribosomal protein uL22 family. Part of the 50S ribosomal subunit.

Functionally, this protein binds specifically to 23S rRNA; its binding is stimulated by other ribosomal proteins, e.g. L4, L17, and L20. It is important during the early stages of 50S assembly. It makes multiple contacts with different domains of the 23S rRNA in the assembled 50S subunit and ribosome. Its function is as follows. The globular domain of the protein is located near the polypeptide exit tunnel on the outside of the subunit, while an extended beta-hairpin is found that lines the wall of the exit tunnel in the center of the 70S ribosome. The chain is Large ribosomal subunit protein uL22 from Chlorobaculum tepidum (strain ATCC 49652 / DSM 12025 / NBRC 103806 / TLS) (Chlorobium tepidum).